A 324-amino-acid chain; its full sequence is tRNA pseudouridine synthase B (324 aa).

Asp49 (nucleophile) is an active-site residue.

This sequence belongs to the pseudouridine synthase TruB family. Type 1 subfamily.

It catalyses the reaction uridine(55) in tRNA = pseudouridine(55) in tRNA. Functionally, responsible for synthesis of pseudouridine from uracil-55 in the psi GC loop of transfer RNAs. The polypeptide is tRNA pseudouridine synthase B (Tolumonas auensis (strain DSM 9187 / NBRC 110442 / TA 4)).